Here is a 390-residue protein sequence, read N- to C-terminus: ATP-sensitive inward rectifier potassium channel 11 (390 aa).

Topologically, residues 1–65 (MLSRKGIIPE…LQDVFTTLVD (65 aa)) are cytoplasmic. Residues Asn-48 and Arg-50 each contribute to the ATP site. The chain crosses the membrane as a helical span at residues 66–92 (LKWPHTLLIFTMSFLCSWLLFAMAWWL). Over 93 to 116 (IAFAHGDLAPSEGTAEPCVTSIHS) the chain is Extracellular. Cys-110 and Cys-142 are joined by a disulfide. The segment at residues 117–133 (FSSAFLFSIEVQVTIGF) is an intramembrane region (discontinuously helical; Pore-forming). Residues Thr-130 and Phe-133 each contribute to the K(+) site. Residues 130–135 (TIGFGG) carry the Selectivity filter motif. The Extracellular portion of the chain corresponds to 134–142 (GGRMVTEEC). A helical membrane pass occupies residues 143–171 (PLAILILIVQNIVGLMINAIMLGCIFMKT). At 172–390 (AQAHRRAETL…KFSISPDSLS (219 aa)) the chain is on the cytoplasmic side. Residue Arg-176 participates in a 1,2-diacyl-sn-glycero-3-phospho-(1D-myo-inositol-4,5-bisphosphate) binding. Tyr-330 lines the ATP pocket. The residue at position 341 (Thr-341) is a Phosphothreonine; by MAPK1. Ser-385 bears the Phosphoserine; by MAPK1 mark.

Belongs to the inward rectifier-type potassium channel (TC 1.A.2.1) family. KCNJ11 subfamily. Homotetramer; the homotetramer binds four ATP molecules (one ATP per subunit). Forms an heterooctamer with ABCC8/SUR1; one KCNJ11 homotetramer interacts with four ABCC8/SUR1 molecules. Interacts with ABCC9/SUR2. In terms of processing, phosphorylation by MAPK1 results in changes in channel gating that destabilize the closed states and reduce the ATP sensitivity.

Its subcellular location is the membrane. It carries out the reaction K(+)(in) = K(+)(out). KATP channels are regulated by cytoplasmic ATP/ADP ratios; ATP inhibits the channel by closing the pore, while ADP activates the channel. Activated by phosphatidylinositol 4,5-biphosphate (PtdIns(4,5)P2). Its function is as follows. Inward rectifier potassium channel that forms the pore of ATP-sensitive potassium channels (KATP), regulating potassium permeability as a function of cytoplasmic ATP and ADP concentrations in many different cells. Inward rectifier potassium channels are characterized by a greater tendency to allow potassium to flow into the cell rather than out of it. Their voltage dependence is regulated by the concentration of extracellular potassium; as external potassium is raised, the voltage range of the channel opening shifts to more positive voltages. The inward rectification is mainly due to the blockage of outward current by internal magnesium. Can be blocked by extracellular barium. In pancreatic cells, it forms KATP channels with ABCC8/SUR1. Can form cardiac and smooth muscle-type KATP channels with ABCC9. This is ATP-sensitive inward rectifier potassium channel 11 (KCNJ11) from Homo sapiens (Human).